We begin with the raw amino-acid sequence, 269 residues long: Diaminopimelate epimerase (269 aa).

Substrate-binding residues include asparagine 20 and asparagine 63. The Proton donor role is filled by cysteine 72. Residues 73–74 (GN), asparagine 179, and 197–198 (ER) each bind substrate. Cysteine 207 functions as the Proton acceptor in the catalytic mechanism. 208-209 (GT) lines the substrate pocket.

Belongs to the diaminopimelate epimerase family. In terms of assembly, homodimer.

The protein localises to the cytoplasm. It catalyses the reaction (2S,6S)-2,6-diaminopimelate = meso-2,6-diaminopimelate. It functions in the pathway amino-acid biosynthesis; L-lysine biosynthesis via DAP pathway; DL-2,6-diaminopimelate from LL-2,6-diaminopimelate: step 1/1. Its function is as follows. Catalyzes the stereoinversion of LL-2,6-diaminopimelate (L,L-DAP) to meso-diaminopimelate (meso-DAP), a precursor of L-lysine and an essential component of the bacterial peptidoglycan. This chain is Diaminopimelate epimerase, found in Chlamydia muridarum (strain MoPn / Nigg).